The primary structure comprises 157 residues: Pyruvoyl-dependent arginine decarboxylase 2 (157 aa).

Serine 43 is modified (pyruvic acid (Ser)).

Belongs to the PdaD family. Pyruvate is required as a cofactor.

The catalysed reaction is L-arginine + H(+) = agmatine + CO2. The protein is Pyruvoyl-dependent arginine decarboxylase 2 (pdaD2) of Archaeoglobus fulgidus (strain ATCC 49558 / DSM 4304 / JCM 9628 / NBRC 100126 / VC-16).